The chain runs to 185 residues: Histone H1-delta (185 aa).

Disordered stretches follow at residues 1 to 37 (MADTDAAPAAPAPSTPKKAAKKKASKPKTPASHPKYS) and 90 to 185 (RHVK…GKKK). One can recognise an H15 domain in the interval 32–105 (SHPKYSDMIA…GASGSFLLAE (74 aa)). The span at 109 to 185 (TPKKAAAKKA…KAAKGKGKKK (77 aa)) shows a compositional bias: basic residues.

This sequence belongs to the histone H1/H5 family.

The protein localises to the nucleus. It localises to the chromosome. Functionally, histones H1 are necessary for the condensation of nucleosome chains into higher-order structures. The sequence is that of Histone H1-delta from Strongylocentrotus purpuratus (Purple sea urchin).